A 262-amino-acid chain; its full sequence is Polyamine aminopropyltransferase (262 aa).

The region spanning 1–249 (MWITQEITPY…DIHRAAFALP (249 aa)) is the PABS domain. Asn29 contributes to the S-methyl-5'-thioadenosine binding site. Residue Asp83 coordinates spermidine. Asp155 functions as the Proton acceptor in the catalytic mechanism.

This sequence belongs to the spermidine/spermine synthase family. In terms of assembly, homodimer or homotetramer.

It localises to the cytoplasm. It catalyses the reaction S-adenosyl 3-(methylsulfanyl)propylamine + putrescine = S-methyl-5'-thioadenosine + spermidine + H(+). It functions in the pathway amine and polyamine biosynthesis; spermidine biosynthesis; spermidine from putrescine: step 1/1. Its function is as follows. Catalyzes the irreversible transfer of a propylamine group from the amino donor S-adenosylmethioninamine (decarboxy-AdoMet) to putrescine (1,4-diaminobutane) to yield spermidine. The polypeptide is Polyamine aminopropyltransferase (Helicobacter pylori (strain HPAG1)).